The following is a 33-amino-acid chain: Alpha-amanitin proprotein (33 aa).

A propeptide spanning residues 1–10 (MSDINATRLP) is cleaved from the precursor. Residue isoleucine 11 is modified to (3R,4R)-4,5-dihydroxyisoleucine; in form alpha-amanitin. (3R,4S)-4-hydroxyisoleucine; in form gamma-amanitin is present on isoleucine 11. The cyclopeptide (Ile-Pro) cross-link spans 11 to 18 (IWGIGCNP). Positions 12-16 (WGIGC) form a cross-link, 2'-cysteinyl-6'-hydroxytryptophan sulfoxide (Trp-Cys). Proline 18 bears the 4-hydroxyproline mark. Positions 19–33 (CVGDEVTALITRGEA) are excised as a propeptide.

Belongs to the MSDIN fungal toxin family. Post-translationally, processed by the macrocyclase-peptidase enzyme POPB to yield a toxic cyclic decapeptide. POPB first removes 10 residues from the N-terminus. Conformational trapping of the remaining peptide forces the enzyme to release this intermediate rather than proceed to macrocyclization. The enzyme rebinds the remaining peptide in a different conformation and catalyzes macrocyclization of the N-terminal 8 residues.

In terms of biological role, major toxin belonging to the bicyclic octapeptides amatoxins that acts by binding non-competitively to RNA polymerase II and greatly slowing the elongation of transcripts from target promoters. This Amanita pallidorosea protein is Alpha-amanitin proprotein.